A 1089-amino-acid chain; its full sequence is Protein phosphatase 1 regulatory subunit 3A (1089 aa).

Residues 32-57 are disordered; the sequence is KATFKPGFSPQPSRRGSGSSEDMYLD. Residues 37–51 are compositionally biased toward low complexity; the sequence is PGFSPQPSRRGSGSS. A phosphoserine; by GSK3 mark is found at serine 40 and serine 44. 2 positions are modified to phosphoserine: serine 48 and serine 51. Threonine 58 carries the post-translational modification Phosphothreonine. Residues 64–67 carry the PP1-binding motif motif; sequence RRVS. Serine 67 carries the post-translational modification Phosphoserine; by PKA. The CBM21 domain maps to 123–231; it reads EQLQVQKAVL…NNNGTNYILV (109 aa). 3 disordered regions span residues 385–420, 479–501, and 566–649; these read FYHS…GDTS, HGDS…KVDN, and PCPS…SDIA. Residues 581 to 600 are compositionally biased toward polar residues; sequence SGSNLEPGTSDLSSPRNFSP. Over residues 602–614 the composition is skewed to basic and acidic residues; that stretch reads TDDHLFQADRENS. Positions 615–625 are enriched in polar residues; it reads DSSNPENQNMN. Serine 821 is subject to Phosphoserine. A disordered region spans residues 949–968; it reads IMKSGSGGERGGGPILQQKE. A compositionally biased stretch (gly residues) spans 953–962; it reads GSGGERGGGP. A helical transmembrane segment spans residues 1047-1067; it reads LLFLIFLATVYYYDLMIGLAF.

In terms of assembly, interacts with PPP1CC catalytic subunit of PP1, and associates with glycogen. Phosphorylation at Ser-48 by ISPK stimulates the dephosphorylation of glycogen synthase and phosphorylase kinase. As to expression, skeletal muscle and heart.

It is found in the membrane. Its function is as follows. Seems to act as a glycogen-targeting subunit for PP1. PP1 is essential for cell division, and participates in the regulation of glycogen metabolism, muscle contractility and protein synthesis. Plays an important role in glycogen synthesis but is not essential for insulin activation of glycogen synthase. This Mus musculus (Mouse) protein is Protein phosphatase 1 regulatory subunit 3A (Ppp1r3a).